A 461-amino-acid chain; its full sequence is Thyroid hormone receptor beta (461 aa).

Positions 1–24 (MTPNSMTENGLPAWDKQKPRPDRG) are disordered. The segment at 1–106 (MTPNSMTENG…IPSYLDKDEL (106 aa)) is modulating. Over residues 15–24 (DKQKPRPDRG) the composition is skewed to basic and acidic residues. Zn(2+) contacts are provided by cysteine 107, cysteine 110, cysteine 124, cysteine 127, cysteine 145, cysteine 151, cysteine 161, and cysteine 164. NR C4-type zinc fingers lie at residues 107–127 (CVVCGDKATGYHYRCITCEGC) and 145–169 (CKYEGKCIIDKVTRNQCQECRFKKC). The segment at residues 107-181 (CVVCGDKATG…VGMATDLVLD (75 aa)) is a DNA-binding region (nuclear receptor). Positions 217–461 (EEWELIKTVT…PPLFLEVFED (245 aa)) constitute an NR LBD domain. An interaction with NR2F6 region spans residues 244–461 (KFLPEDIGQA…PPLFLEVFED (218 aa)). 3,3',5-triiodo-L-thyronine is bound by residues arginine 282, asparagine 331, and histidine 435. L-thyroxine contacts are provided by arginine 282, asparagine 331, and histidine 435.

The protein belongs to the nuclear hormone receptor family. NR1 subfamily. As to quaternary structure, binds DNA as a dimer; homodimer and heterodimer with RXRB. Interacts with the coactivators NCOA1/SRC1, NCOA2/GRIP1, NCOA7 and MED1/TRAP220 in a ligand-inducible manner. Interacts with the corepressor NCOR1 in absence of ligand. Interacts with C1D. Interacts with NR2F6; the interaction impairs the binding of the THRB homodimer and THRB:RXRB heterodimer to T3 response elements. Interacts with PRMT2 and THRSP. Interacts with TACC1; this interaction is decreased in the presence of thyroid hormone T3.

It is found in the nucleus. Nuclear hormone receptor that can act as a repressor or activator of transcription. High affinity receptor for thyroid hormones, including triiodothyronine and thyroxine. The sequence is that of Thyroid hormone receptor beta (Thrb) from Mus musculus (Mouse).